A 364-amino-acid polypeptide reads, in one-letter code: Gap junction delta-4 protein (364 aa).

The Cytoplasmic portion of the chain corresponds to 1–19 (MEKLNLLGFLIITLNCNVT). The chain crosses the membrane as a helical span at residues 20–40 (IMGMIWLIVEVLLRMLVVVLA). The Extracellular segment spans residues 41-76 (GSPIYEDEQERFICNTLQPGCANVCYDLFSPVSPLR). The helical transmembrane segment at 77–97 (FWLVQSLALLLPSVVFGTYTL) threads the bilayer. Residues 98–128 (HRGAKLAAVGGACRPQVPDLSTAYLVHLLLR) lie on the Cytoplasmic side of the membrane. Residues 129–149 (MLLEAGLAFLHYFLFGFSVPA) form a helical membrane-spanning segment. The Extracellular portion of the chain corresponds to 150–173 (RVSCSHVPCSGAVDCYVSRPTEKS). The chain crosses the membrane as a helical span at residues 174-194 (LLILFFWAVSALSFLLSLADL). At 195–364 (LWILPRRKTL…HLRTKKSEWV (170 aa)) the chain is on the cytoplasmic side. Positions 331 to 340 (HLARHSSASK) are enriched in polar residues. Residues 331 to 364 (HLARHSSASKPQAPCRLTTSGSAPHLRTKKSEWV) form a disordered region.

This sequence belongs to the connexin family. Delta-type subfamily. A connexon is composed of a hexamer of connexins.

The protein resides in the cell membrane. It localises to the cell junction. Its subcellular location is the gap junction. In terms of biological role, one gap junction consists of a cluster of closely packed pairs of transmembrane channels, the connexons, through which materials of low MW diffuse from one cell to a neighboring cell. This is Gap junction delta-4 protein (Gjd4) from Mus musculus (Mouse).